Reading from the N-terminus, the 542-residue chain is MARYVFITGGVVSSLGKGIAAAALGALLQARGYRVRLRKLDPYLNVDPGTMSPTQHGEVFVTDDGAETDLDLGHYERFTGRSATKTDNITTGRIYKNIIDKERRGDYLGATVQVIPHVTNEIKDFVIEGNDDYDFVICEIGGTVGDIEAMPFMEAIRQLGNDLPRGTAVYVHLTLMPYIPAAGELKTKPTQHSVKELQALGIHPDILLVRADREIPEAERRKLSLFCNVRPSAVIQALDVANIYDVPIAYHKEGLDDEVLAAFGIEPAPKPRLDPWEEVCNRIRTPEGEVTIAIVGKYTGLKDAYKSLIEALHHGGIANRVKVKLEWIESEVFEKEDPAPYLEKVHGILVPGGFGERGSEGKIHAARFARERKVPYFGICFGMQMAVIEAARNLADVSGASSTEFGPTKEPVVGLMTEWVKGNELQKRTAAGDLGGTMRLGAYKAALKKGTKISDIYGSTDISERHRHRYEVNVDYKDRLESCGLVFSGMSPDGVLPETIEYPDHPWFIGVQYHPELKSRPLDPHPLFASFIEAATEQSRLV.

The tract at residues 1-265 is amidoligase domain; that stretch reads MARYVFITGG…DDEVLAAFGI (265 aa). Residue S13 participates in CTP binding. S13 provides a ligand contact to UTP. Residues 14 to 19 and D71 each bind ATP; that span reads SLGKGI. Mg(2+) contacts are provided by D71 and E139. Residues 146–148, 186–191, and K222 contribute to the CTP site; these read DIE and KTKPTQ. UTP contacts are provided by residues 186-191 and K222; that span reads KTKPTQ. A Glutamine amidotransferase type-1 domain is found at 291–541; it reads TIAIVGKYTG…IEAATEQSRL (251 aa). An L-glutamine-binding site is contributed by G353. Catalysis depends on C380, which acts as the Nucleophile; for glutamine hydrolysis. Residues 381-384, E404, and R469 each bind L-glutamine; that span reads FGMQ. Catalysis depends on residues H514 and E516.

Belongs to the CTP synthase family. As to quaternary structure, homotetramer.

The catalysed reaction is UTP + L-glutamine + ATP + H2O = CTP + L-glutamate + ADP + phosphate + 2 H(+). The enzyme catalyses L-glutamine + H2O = L-glutamate + NH4(+). It catalyses the reaction UTP + NH4(+) + ATP = CTP + ADP + phosphate + 2 H(+). It participates in pyrimidine metabolism; CTP biosynthesis via de novo pathway; CTP from UDP: step 2/2. With respect to regulation, allosterically activated by GTP, when glutamine is the substrate; GTP has no effect on the reaction when ammonia is the substrate. The allosteric effector GTP functions by stabilizing the protein conformation that binds the tetrahedral intermediate(s) formed during glutamine hydrolysis. Inhibited by the product CTP, via allosteric rather than competitive inhibition. Functionally, catalyzes the ATP-dependent amination of UTP to CTP with either L-glutamine or ammonia as the source of nitrogen. Regulates intracellular CTP levels through interactions with the four ribonucleotide triphosphates. This Rhizobium leguminosarum bv. trifolii (strain WSM2304) protein is CTP synthase.